The chain runs to 437 residues: Probable eukaryotic translation initiation factor 5-2 (437 aa).

29 to 36 (GKGNGIKT) lines the GTP pocket. Composition is skewed to basic and acidic residues over residues 148–179 (EQKKVSKDKKAMRKAEKERLKEGELADEEQRK) and 191–212 (KDSKTSKNHSSDEDISPKHDEN). Disordered stretches follow at residues 148–231 (EQKK…WQTD) and 262–284 (EKKAPKSKSNGNVVKTENPPPQE). Position 201 is a phosphoserine; by CK2 (serine 201). Positions 213–226 (ALEVDEDEDDDDGV) are enriched in acidic residues. Threonine 230 carries the phosphothreonine; by CK2 modification. Residues 278 to 436 (ENPPPQEKNL…QSAESESEEE (159 aa)) form the W2 domain. Serine 428, serine 431, and serine 433 each carry phosphoserine; by CK2.

Belongs to the eIF-2-beta/eIF-5 family. Phosphorylated at Ser-201, Thr-230, Ser-428, Ser-431, and Ser-433 by CK2.

Functionally, catalyzes the hydrolysis of GTP bound to the 40S ribosomal initiation complex (40S.mRNA.Met-tRNA[F].eIF-2.GTP) with the subsequent joining of a 60S ribosomal subunit resulting in the release of eIF-2 and the guanine nucleotide. The subsequent joining of a 60S ribosomal subunit results in the formation of a functional 80S initiation complex (80S.mRNA.Met-tRNA[F]). This chain is Probable eukaryotic translation initiation factor 5-2, found in Arabidopsis thaliana (Mouse-ear cress).